The following is a 30-amino-acid chain: Small toxic protein BsrE (30 aa).

The helical transmembrane segment at 4–24 threads the bilayer; it reads FQALMLMLAIGSFIIALLTYI.

The protein resides in the cell membrane. Its function is as follows. Toxic component of a type I toxin-antitoxin (TA) system; overexpression in the absence of cognate antisense antitoxin SR5 RNA leads to cell lysis. Base pairing occurs between the 3' UTRs of bsrE mRNA and SR5 RNA which leads to bsrE mRNA degradation initiated by RNase III (rnc) and RNase J1 (rnjA). Genetic evidence suggests an unidentified RNA-binding protein may exist that promotes TA RNA interaction. The sequence is that of Small toxic protein BsrE from Bacillus subtilis (strain 168).